A 198-amino-acid chain; its full sequence is Protein hunchback (198 aa).

2 disordered regions span residues 16 to 111 and 152 to 198; these read SHHH…LPGL and NDKL…KYMA. Basic residues predominate over residues 17 to 31; sequence HHHHHHHAHHSHHQH. Low complexity-rich tracts occupy residues 35 to 46 and 56 to 83; these read SNSNSNASSPHQ and SNTNLQLEQYLKQQQQQQQQQQQQQQQQ. The segment covering 95 to 105 has biased composition (polar residues); sequence PSPSNNDQNSP. Basic and acidic residues predominate over residues 179–198; the sequence is EPEKEHDLMSNSSEDMKYMA.

The protein belongs to the hunchback C2H2-type zinc-finger protein family.

Its subcellular location is the nucleus. Functionally, gap class segmentation protein that controls development of head structures. The polypeptide is Protein hunchback (hb) (Drosophila lineosetae (Fruit fly)).